We begin with the raw amino-acid sequence, 875 residues long: MSGSLSRGNGGKKVLNKNQLLKRNRIRNARSIRAEAVAASSTKTGTPSDLSESGSKLNVDQFISSRQFEVKQLQLAMHNSKAASSTRIFQALPRKLRRRTASHNVRRIPKRMRNRALREMRKSDQQDVLKGSSASSRKAHGLNAKQLYKARMSIKLLRLASKSTSMKLSMPPEVTSSNCHVRQKIKTLKRMIKESSTANPNIKLLNNRMGSYDCTGVNELAPIPKGRVKYTKRQKHFAWLPTHIWNAKRSHMMKRWGYQMVWAPTQKCFKLTHRLGGDTCSSDGALCMDSSYIGTIIVKDKSNDSEGDFLKSIIGKLTAERANLRKYREGQVLFQGLIYSFNEENGEDSTKPLGPCDVFWVQKDTAIIRLHPSIYTQVFNILLQHKEKLTVQDCRYSLASVTLKGAKALESLASCLRSTEYSKSFEQFKMVSMITDHNALPQRCTFAFEAIDPRHLAAPKKLNDSQRKTVNSDDILSLHENYPQDEINAVFNELCDPESRTQSYNNQNTLKEISARRYKLLTATPNSINKTTVPFKESDDPSIPLVIIRRLKTRDWIVVLPWFWLLPLWHLLNRIPRMYHIGLRQFQQIQYENKQLYFPDDYPFTQLGYIENSFYKKEASKTKWDRKPMGKRINFEKIKDIHNTKLPAYSGEIGDFFSSDWRFLQILRNGIDYLQRNDKTLELMDSKKTGQFNAQGVRDINCVNDVLEFCKDYEAKTKAMSLSIEENIPVALCKNRKCQFRTPDSISVNSSSFSLTFFPRCIIAVSCTLLERGHPKDNARIYQVPEKDLEHWLQLAKGVYRPNGRKDHDLKIPLPEVHDLIGFITSGTYHLNCGNGMGIGFIDHHAAIRQPTRYVLIRNVGTNTYRLGEWSKISV.

Disordered regions lie at residues 1–20, 35–54, and 119–140; these read MSGS…KNQL, EAVA…SESG, and EMRK…RKAH. Polar residues predominate over residues 39–54; it reads ASSTKTGTPSDLSESG. A Phosphothreonine modification is found at Thr-524.

As to quaternary structure, component of nuclear RNase P and RNase MRP complexes. RNase P consists of an RNA moiety and at least 9 protein subunits including POP1, POP3, POP4, POP5, POP6, POP7, POP8, RPP1 and RPR2. RNase MRP complex consists of an RNA moiety and at least 10 protein subunits including POP1, POP3, POP4, POP5, POP6, POP7, POP8, RMP1, RPP1 and SNM1, many of which are shared with the RNase P complex.

The protein resides in the cytoplasm. The protein localises to the nucleus. The catalysed reaction is Endonucleolytic cleavage of RNA, removing 5'-extranucleotides from tRNA precursor.. Required for processing of 5.8S rRNA (short form) at site A3 and for 5' and 3' processing of pre-tRNA. The sequence is that of Ribonucleases P/MRP protein subunit POP1 (POP1) from Saccharomyces cerevisiae (strain ATCC 204508 / S288c) (Baker's yeast).